A 58-amino-acid chain; its full sequence is Ribosome modulation factor (58 aa).

Over residues M1–S14 the composition is skewed to basic residues. Residues M1–S25 form a disordered region.

Belongs to the ribosome modulation factor family.

It localises to the cytoplasm. Functionally, during stationary phase, converts 70S ribosomes to an inactive dimeric form (100S ribosomes). The polypeptide is Ribosome modulation factor (Alteromonas naphthalenivorans).